The chain runs to 225 residues: Uracil-DNA glycosylase (225 aa).

D65 (proton acceptor) is an active-site residue.

This sequence belongs to the uracil-DNA glycosylase (UDG) superfamily. UNG family.

Its subcellular location is the cytoplasm. It carries out the reaction Hydrolyzes single-stranded DNA or mismatched double-stranded DNA and polynucleotides, releasing free uracil.. In terms of biological role, excises uracil residues from the DNA which can arise as a result of misincorporation of dUMP residues by DNA polymerase or due to deamination of cytosine. This is Uracil-DNA glycosylase from Clostridium perfringens (strain ATCC 13124 / DSM 756 / JCM 1290 / NCIMB 6125 / NCTC 8237 / Type A).